The sequence spans 278 residues: GTPase Era (278 aa).

The region spanning 7–168 (YCGYIAIVGK…ENLIYPYLPN (162 aa)) is the Era-type G domain. The interval 15 to 22 (GKPNVGKS) is G1. 15–22 (GKPNVGKS) provides a ligand contact to GTP. The tract at residues 41–45 (NTTQK) is G2. Residues 62–65 (DTPG) are G3. Residues 62-66 (DTPGI) and 117-120 (NKID) each bind GTP. Residues 117 to 120 (NKID) form a G4 region. Residues 147–149 (ISA) are G5. The KH type-2 domain occupies 199 to 276 (LRDELPSIIT…YLIIWVKVKI (78 aa)).

This sequence belongs to the TRAFAC class TrmE-Era-EngA-EngB-Septin-like GTPase superfamily. Era GTPase family. As to quaternary structure, monomer.

Its subcellular location is the cytoplasm. The protein resides in the cell membrane. Its function is as follows. An essential GTPase that binds both GDP and GTP, with rapid nucleotide exchange. Plays a role in 16S rRNA processing and 30S ribosomal subunit biogenesis and possibly also in cell cycle regulation and energy metabolism. This Buchnera aphidicola subsp. Schizaphis graminum (strain Sg) protein is GTPase Era.